A 360-amino-acid chain; its full sequence is Phospho-N-acetylmuramoyl-pentapeptide-transferase (360 aa).

The next 10 helical transmembrane spans lie at 25-45 (RGILGVLTALILALCLGPWMI), 73-93 (TMGGALILSAIAISTLLWADL), 97-117 (YVWTVLAVTLLFGAIGWVDDY), 132-152 (WKYFWQSVFGLGAALFLYMTA), 167-187 (TIEIPLGAAFIVLTYFVIVGS), 199-219 (GLAIMPTVMVGGALGIFCYLS), 236-256 (AGELIVFCGALIGAGLGFLWF), 263-283 (VFMGDVGALALGAALGTIAVI), 288-308 (VVLFIMGGVFVMETLSVMIQV), and 338-358 (VIVRFWIITVVLVLIGLATLK).

Belongs to the glycosyltransferase 4 family. MraY subfamily. Mg(2+) is required as a cofactor.

It is found in the cell inner membrane. It catalyses the reaction UDP-N-acetyl-alpha-D-muramoyl-L-alanyl-gamma-D-glutamyl-meso-2,6-diaminopimeloyl-D-alanyl-D-alanine + di-trans,octa-cis-undecaprenyl phosphate = di-trans,octa-cis-undecaprenyl diphospho-N-acetyl-alpha-D-muramoyl-L-alanyl-D-glutamyl-meso-2,6-diaminopimeloyl-D-alanyl-D-alanine + UMP. It functions in the pathway cell wall biogenesis; peptidoglycan biosynthesis. Its function is as follows. Catalyzes the initial step of the lipid cycle reactions in the biosynthesis of the cell wall peptidoglycan: transfers peptidoglycan precursor phospho-MurNAc-pentapeptide from UDP-MurNAc-pentapeptide onto the lipid carrier undecaprenyl phosphate, yielding undecaprenyl-pyrophosphoryl-MurNAc-pentapeptide, known as lipid I. This Azotobacter vinelandii (strain DJ / ATCC BAA-1303) protein is Phospho-N-acetylmuramoyl-pentapeptide-transferase.